The sequence spans 417 residues: MAEVRNYTFNFGPQHPAAHGVLRLIVEVDGEVIQRIDPHIGLLHRATEKLAESKPYNQTIGYMDRLDYVSMMANEHGYVLAIEKLLGIEPPIRAKYIRTMFDEITRILNHLLWLGAHALDVGAMTVFLYCFREREDLMDCYEAVSGARMHATYYRPGGVYRDLPDSMPKYKPSRWHNEKAVKKMNEAREGSLLDFIWDFTARFPNLIDEYESLLTDNRIWKQRTVGIGVVSAERALQLGFTGPMLRASGVEWDLRKKQPYAAYDRVDFDIPIGREGDCYDRYLVRIEEMRQSNRIIRQCVEWLRKNPGPVIIDDYKIVPPQREVMKRDMEALIHHFKLFTEGYIVPEGEAYAAVEQPKGEFGVYIVSDGANKPYRVKVRAASYPHLAAMNEMCRGHMIADLVAIISSIDIVFGEIDR.

It belongs to the complex I 49 kDa subunit family. In terms of assembly, NDH-1 is composed of 14 different subunits. Subunits NuoB, C, D, E, F, and G constitute the peripheral sector of the complex.

It is found in the cell inner membrane. The enzyme catalyses a quinone + NADH + 5 H(+)(in) = a quinol + NAD(+) + 4 H(+)(out). In terms of biological role, NDH-1 shuttles electrons from NADH, via FMN and iron-sulfur (Fe-S) centers, to quinones in the respiratory chain. The immediate electron acceptor for the enzyme in this species is believed to be ubiquinone. Couples the redox reaction to proton translocation (for every two electrons transferred, four hydrogen ions are translocated across the cytoplasmic membrane), and thus conserves the redox energy in a proton gradient. This is NADH-quinone oxidoreductase subunit D from Coxiella burnetii (strain Dugway 5J108-111).